A 211-amino-acid chain; its full sequence is Uracil phosphoribosyltransferase (211 aa).

5-phospho-alpha-D-ribose 1-diphosphate-binding positions include arginine 78, arginine 103, and 130-138 (DPMLATGGT). Uracil contacts are provided by residues isoleucine 195 and 200–202 (GDA). Aspartate 201 is a binding site for 5-phospho-alpha-D-ribose 1-diphosphate.

The protein belongs to the UPRTase family. The cofactor is Mg(2+).

It carries out the reaction UMP + diphosphate = 5-phospho-alpha-D-ribose 1-diphosphate + uracil. It functions in the pathway pyrimidine metabolism; UMP biosynthesis via salvage pathway; UMP from uracil: step 1/1. Allosterically activated by GTP. In terms of biological role, catalyzes the conversion of uracil and 5-phospho-alpha-D-ribose 1-diphosphate (PRPP) to UMP and diphosphate. This Paenarthrobacter aurescens (strain TC1) protein is Uracil phosphoribosyltransferase.